The primary structure comprises 675 residues: Heat shock 70 kDa protein, mitochondrial (675 aa).

A mitochondrion-targeting transit peptide spans 1–52 (MAATLLRSLQRRNLSSSSVSAFRSLTGSTKTSYATHKLASLTRPFSSRPAGN). The segment at 639 to 675 (VSKIGQHMSGGSSGGPSEGGSQGGEQAPEAEYEEVKK) is disordered. Residues 649–661 (GSSGGPSEGGSQG) show a composition bias toward gly residues. A compositionally biased stretch (acidic residues) spans 666 to 675 (PEAEYEEVKK).

Belongs to the heat shock protein 70 family.

It localises to the mitochondrion. This is Heat shock 70 kDa protein, mitochondrial (HSP1) from Pisum sativum (Garden pea).